The chain runs to 434 residues: Eukaryotic translation initiation factor 3 subunit E (434 aa).

The PCI domain occupies 219–392; sequence FFNHPKGRDL…GHVVMGTQPL (174 aa).

Belongs to the eIF-3 subunit E family. As to quaternary structure, component of the eukaryotic translation initiation factor 3 (eIF-3) complex. The eIF-3 complex interacts with pix. Interacts with mxt.

The protein localises to the cytoplasm. In terms of biological role, component of the eukaryotic translation initiation factor 3 (eIF-3) complex, which is involved in protein synthesis of a specialized repertoire of mRNAs and, together with other initiation factors, stimulates binding of mRNA and methionyl-tRNAi to the 40S ribosome. The eIF-3 complex specifically targets and initiates translation of a subset of mRNAs involved in cell proliferation. The polypeptide is Eukaryotic translation initiation factor 3 subunit E (eIF3-S6) (Drosophila virilis (Fruit fly)).